Consider the following 176-residue polypeptide: Cytochrome b (176 aa).

Helical transmembrane passes span 33 to 53 (FGSL…FLAM), 77 to 98 (WLLR…YLHV), and 113 to 133 (WNVG…GYVL). Positions 83 and 97 each coordinate heme b.

It belongs to the cytochrome b family. As to quaternary structure, the cytochrome bc1 complex contains 11 subunits: 3 respiratory subunits (MT-CYB, CYC1 and UQCRFS1), 2 core proteins (UQCRC1 and UQCRC2) and 6 low-molecular weight proteins (UQCRH/QCR6, UQCRB/QCR7, UQCRQ/QCR8, UQCR10/QCR9, UQCR11/QCR10 and a cleavage product of UQCRFS1). This cytochrome bc1 complex then forms a dimer. Heme b serves as cofactor.

The protein resides in the mitochondrion inner membrane. Component of the ubiquinol-cytochrome c reductase complex (complex III or cytochrome b-c1 complex) that is part of the mitochondrial respiratory chain. The b-c1 complex mediates electron transfer from ubiquinol to cytochrome c. Contributes to the generation of a proton gradient across the mitochondrial membrane that is then used for ATP synthesis. This chain is Cytochrome b (MT-CYB), found in Tadarida brasiliensis (Brazilian free-tailed bat).